A 148-amino-acid polypeptide reads, in one-letter code: uncharacterized protein (148 aa).

The segment covering 1 to 17 (MEGLQRSTISFRRQGSS) has biased composition (polar residues). Residues 1–148 (MEGLQRSTIS…SRRRIVTKKR (148 aa)) are disordered. 2 stretches are compositionally biased toward basic and acidic residues: residues 36-47 (EQKDESQRDEQP) and 58-67 (KPIDEKDKLR). 2 positions are modified to phosphoserine: Ser-100 and Ser-107. A compositionally biased stretch (basic residues) spans 128-148 (VNPRKRPPKRRSRRRIVTKKR).

This is an uncharacterized protein from Arabidopsis thaliana (Mouse-ear cress).